Reading from the N-terminus, the 449-residue chain is Gamma conglutin 1 (449 aa).

An N-terminal signal peptide occupies residues 1 to 33 (MARNMAHILHILVISLSYSFLFVSSSSQDSQSL). Residues 60-429 (HWANIHKRTP…DLERSRVGFN (370 aa)) form the Peptidase A1 domain. Intrachain disulfides connect Cys-88–Cys-178, Cys-102–Cys-115, Cys-107–Cys-133, Cys-118–Cys-128, and Cys-350–Cys-391. Asn-130 carries an N-linked (GlcNAc...) asparagine glycan.

Belongs to the peptidase A1 family. In terms of assembly, two-subunit monomeric unit made of alpha and beta subunits coupled by disulfide bonds (at pH 4.5 and under non-reducing conditions). Can also form oligomers including dimer, tetramer and cyclic hexamer (trimer of dimers) (at pH &gt; 5.5). Component of globulins complexes which accumulate in seeds. Interacts with flavonoids (e.g. apigenin glucosides) present in globulins complexes. Forms a static complex with vitexin. Undergoes very complex post-translational maturation; the proteolytic processing leading to the formation of two alpha and beta subunits is incomplete, leaving a certain amount of the protein in an uncut form. Post-translationally, glycosylated on alpha chain. Expressed in developing cotyledons and in the embryonic axis of germinating seeds. Accumulates in seeds, especially in the protein bodies of developing cotyledonary cells (at protein level). Also detected, at low levels, in plumules and radicles.

The protein resides in the secreted. It localises to the extracellular space. In terms of biological role, sulfur-rich seed storage protein that remains undegraded at germination. The protein is Gamma conglutin 1 of Lupinus angustifolius (Narrow-leaved blue lupine).